Here is a 301-residue protein sequence, read N- to C-terminus: Protein FAM221A (301 aa).

Residues 235 to 271 are disordered; sequence MHAPSTSSPQPLAGGNEVGPSTQLSSLRKPEEDDMAY.

It belongs to the FAM221 family.

The polypeptide is Protein FAM221A (Fam221a) (Mus musculus (Mouse)).